A 617-amino-acid chain; its full sequence is Cell pattern formation-associated protein STUA (617 aa).

The tract at residues 1–79 (MNQPAADMYY…PASQMGQNVL (79 aa)) is disordered. The segment covering 24–34 (TVTSGAMSYHS) has biased composition (polar residues). Over residues 45-58 (PQYAPQPQYSQYGY) the composition is skewed to low complexity. A compositionally biased stretch (polar residues) spans 61 to 76 (GLTSPQSAQPASQMGQ). An HTH APSES-type domain is found at 106–212 (RVTATLWEDE…HNIGALLYHP (107 aa)). The segment at residues 140–161 (GTKLLNVAGMTRGRRDGILKSE) is a DNA-binding region (H-T-H motif). Disordered stretches follow at residues 223–274 (AAAE…MGRP), 300–451 (SDSG…DSGA), and 463–617 (APAV…PRRR). 2 stretches are compositionally biased toward low complexity: residues 305–318 (QWAQ…AQGA) and 334–345 (PATPASTPPGTT). 2 stretches are compositionally biased toward polar residues: residues 346 to 361 (IQNM…QYDN) and 368 to 382 (PSAQ…NPAS). A compositionally biased stretch (basic and acidic residues) spans 438 to 447 (EHDHDAEYTH). Residues 488 to 509 (PASGRATPRTAAAPQPYYSQQA) show a composition bias toward low complexity. Composition is skewed to polar residues over residues 519 to 533 (QQPS…SNDR) and 553 to 563 (SMSNGYASQMN). Positions 569-593 (KRGRDEDDDLQRPSSGGGMDLKRRK) are nuclear localization domain. Residues 599 to 617 (QVPAMAYAPPVMAQQPRRR) are compositionally biased toward low complexity.

The protein belongs to the EFG1/PHD1/stuA family.

It localises to the nucleus. Functionally, transcription factor that regulates asexual reproduction. Binds the StuA-response elements (StRE) with the consensus sequence 5'-(A/T)CGCG(T/A)N(A/C)-3' at the promoters of target genes. Required for the formation of aerial hyphae, efficient conidiation, and the formation of perithecia. Essential for the generation of normal turgor pressure within the appressorium. Required for infection of intact apple fruit and penetration of onion epidermal cells. In Colletotrichum gloeosporioides (Anthracnose fungus), this protein is Cell pattern formation-associated protein STUA.